We begin with the raw amino-acid sequence, 226 residues long: UPF0758 protein SPD_0975 (226 aa).

The region spanning 103–225 is the MPN domain; sequence SILSSQKLAK…YFSYREKTDL (123 aa). Zn(2+) contacts are provided by H174, H176, and D187. The short motif at 174–187 is the JAMM motif element; the sequence is HNHPSGAVAPSQND.

The protein belongs to the UPF0758 family.

The polypeptide is UPF0758 protein SPD_0975 (Streptococcus pneumoniae serotype 2 (strain D39 / NCTC 7466)).